The sequence spans 515 residues: Protein disulfide-isomerase (515 aa).

Positions 1–25 (MAISKVWISLLLALAVVLSAPAARA) are cleaved as a signal peptide. The Thioredoxin 1 domain maps to 26–150 (EEAAAAEEAA…IVEYLKKQVG (125 aa)). Active-site nucleophile residues include C68 and C71. C68 and C71 are disulfide-bonded. N283 is a glycosylation site (N-linked (GlcNAc...) asparagine). One can recognise a Thioredoxin 2 domain in the interval 346–489 (LKEQVEAGQI…IVDYIKKNKE (144 aa)). Catalysis depends on nucleophile residues C412 and C415. Cysteines 412 and 415 form a disulfide. Residues 494–509 (AAAAATEKAAEPAATE) show a composition bias toward low complexity. The segment at 494-515 (AAAAATEKAAEPAATEPLKDEL) is disordered. Positions 512–515 (KDEL) match the Prevents secretion from ER motif.

This sequence belongs to the protein disulfide isomerase family.

The protein localises to the endoplasmic reticulum lumen. The enzyme catalyses Catalyzes the rearrangement of -S-S- bonds in proteins.. In terms of biological role, participates in the folding of proteins containing disulfide bonds, may be involved in glycosylation, prolyl hydroxylation and triglyceride transfer. This chain is Protein disulfide-isomerase (PDI), found in Triticum aestivum (Wheat).